The chain runs to 178 residues: Protein Vhl (178 aa).

This sequence belongs to the VHL family. As to quaternary structure, part of a complex with Cul2, Roc1a/Rbx1 and the elongin BC complex. Interacts with sima/Hif1a. Interacts with itself. Interacts with mgr and betaTub56D/tubulin beta-1 chain. Interacts with tubulin alpha-beta heterodimers by itself or in complex with mgr. Interacts with microtubules (MTs).

The protein operates within protein modification; protein ubiquitination. Involved in development of tracheal vasculature. Probably involved in halting cell migration at the end of vascular tube outgrowth. Possesses E3 ubiquitin ligase activity when in complex with Elongin BC complex, Cul2 and Rox1a/Rbx1, and can target sima/Hif1a for ubiquitination. May play a critical role in promoting microtubule stabilization when tubulins are correctly folded by the prefoldin complex. If tubulin is incorrectly folded, may promote its degradation. The polypeptide is Protein Vhl (Drosophila melanogaster (Fruit fly)).